Here is a 108-residue protein sequence, read N- to C-terminus: UPF0060 membrane protein SAB2216c (108 aa).

The next 4 membrane-spanning stretches (helical) occupy residues 5–25, 31–51, 60–80, and 86–106; these read IFIF…IWLW, CSLV…IATF, VYAA…MVVD, and KYDV…LLPS.

It belongs to the UPF0060 family.

Its subcellular location is the cell membrane. In Staphylococcus aureus (strain bovine RF122 / ET3-1), this protein is UPF0060 membrane protein SAB2216c.